The sequence spans 827 residues: SID1 transmembrane family member 1 (827 aa).

The signal sequence occupies residues 1-19; it reads MLDCLRLALLCALPWLLRA. Over 20–309 the chain is Extracellular; that stretch reads AVPGHQEEPL…SIKESVYVKS (290 aa). Residues asparagine 67, asparagine 83, asparagine 136, and asparagine 282 are each glycosylated (N-linked (GlcNAc...) asparagine). The helical transmembrane segment at 310-330 threads the bilayer; that stretch reads SLFSIFVFLSFYLGCLLVVLV. Topologically, residues 331 to 442 are cytoplasmic; the sequence is HHVRFQRKSI…DRRIVSKKYK (112 aa). A disordered region spans residues 344–409; sequence FGSSDGSGNM…VEESDFDTMP (66 aa). The span at 375-386 shows a compositional bias: low complexity; that stretch reads SSSSPGRQMSSS. Acidic residues predominate over residues 398–409; sequence SSVEESDFDTMP. A helical transmembrane segment spans residues 443 to 463; sequence IYFWNIITIAVFYALPVMQLV. The Extracellular portion of the chain corresponds to 464-494; that stretch reads ITYQTVVNVTGNQDICYYNFLCAHPLGVLSA. N-linked (GlcNAc...) asparagine glycosylation is present at asparagine 471. The helical transmembrane segment at 495 to 515 threads the bilayer; the sequence is FNNILSNLGHVLLGFLFLLIV. The Cytoplasmic segment spans residues 516 to 541; that stretch reads LRRDLLHRRALEAKDIFAMEYGIPKH. A helical membrane pass occupies residues 542–562; that stretch reads FGLFYAMGIALMMEGVLSACY. Residues 563-572 lie on the Extracellular side of the membrane; that stretch reads HVCPNYSNFQ. Residue asparagine 567 is glycosylated (N-linked (GlcNAc...) asparagine). A helical transmembrane segment spans residues 573 to 590; that stretch reads FDTSFMYMIAGLCMLKLY. Residues 591-600 lie on the Cytoplasmic side of the membrane; the sequence is QTRHPDINAS. Residues 601–621 traverse the membrane as a helical segment; the sequence is AYSAYASFAVVITLTVLGVVF. The Extracellular portion of the chain corresponds to 622-626; the sequence is GKNDV. A helical transmembrane segment spans residues 627–647; sequence WFWIIFSAIHILSSLALSTQI. At 648–683 the chain is on the cytoplasmic side; sequence YYMGRFKIDLGIFRRAAMVFYTDCIQQCSRPLYMDR. Residues 684–704 form a helical membrane-spanning segment; sequence MVLLIVGNLVNWSFAFFGLIY. The Extracellular portion of the chain corresponds to 705–710; the sequence is RPRDFA. The helical transmembrane segment at 711 to 731 threads the bilayer; that stretch reads SYMLGIFICNLLLYLAFYIIM. Residues 732–741 lie on the Cytoplasmic side of the membrane; that stretch reads KLRSSEKVLP. Residues 742–762 traverse the membrane as a helical segment; that stretch reads LPVFCIAATAVVWAAALYFFF. At 763 to 791 the chain is on the extracellular side; the sequence is QNLSSWEGTPAESREKNRECVLLDFFDDH. N-linked (GlcNAc...) asparagine glycosylation occurs at asparagine 764. A helical membrane pass occupies residues 792–812; it reads DIWHFLSATALFFSFLVLLTL. Topologically, residues 813–827 are cytoplasmic; it reads DDDLDVVRRDQIPVF.

It belongs to the SID1 family.

Its subcellular location is the membrane. In terms of biological role, in vitro binds long double-stranded RNA (dsRNA) (500 and 700 base pairs), but not dsRNA shorter than 300 bp. Not involved in RNA autophagy, a process in which RNA is directly imported into lysosomes in an ATP-dependent manner, and degraded. This chain is SID1 transmembrane family member 1 (Sidt1), found in Mus musculus (Mouse).